The sequence spans 356 residues: Protein-arginine kinase (356 aa).

The Phosphagen kinase C-terminal domain maps to 24-254; sequence IVLSTRIRLA…HQLIQQEKAA (231 aa). ATP is bound by residues 27 to 31, His92, Arg125, 176 to 180, and 207 to 212; these read STRIR, RASVM, and RGIYGE. An RDXXRA motif of the pArg binding pocket involved in allosteric regulation motif is present at residues 337–342; it reads RDYRRA.

Belongs to the ATP:guanido phosphotransferase family.

It carries out the reaction L-arginyl-[protein] + ATP = N(omega)-phospho-L-arginyl-[protein] + ADP + H(+). Its activity is regulated as follows. Appears to be allosterically activated by the binding of pArg-containing polypeptides to the pArg-binding pocket localized in the C-terminal domain of McsB. In terms of biological role, catalyzes the specific phosphorylation of arginine residues in a large number of proteins. Is part of the bacterial stress response system. Protein arginine phosphorylation has a physiologically important role and is involved in the regulation of many critical cellular processes, such as protein homeostasis, motility, competence, and stringent and stress responses, by regulating gene expression and protein activity. The polypeptide is Protein-arginine kinase (Bacillus cytotoxicus (strain DSM 22905 / CIP 110041 / 391-98 / NVH 391-98)).